The sequence spans 341 residues: Ketol-acid reductoisomerase (NADP(+)) (341 aa).

Positions 2–182 constitute a KARI N-terminal Rossmann domain; the sequence is AKIYYNDDAD…GGTRAGVIET (181 aa). Residues 25-28, Ser-51, Ser-53, and 83-86 contribute to the NADP(+) site; these read YGSQ and DQVQ. His-108 is a catalytic residue. Gly-134 is a binding site for NADP(+). The KARI C-terminal knotted domain occupies 183 to 328; that stretch reads TFTEETESDL…RKLRSLFAWE (146 aa). Residues Asp-191, Glu-195, Glu-227, and Glu-231 each coordinate Mg(2+). Ser-252 serves as a coordination point for substrate.

Belongs to the ketol-acid reductoisomerase family. The cofactor is Mg(2+).

The catalysed reaction is (2R)-2,3-dihydroxy-3-methylbutanoate + NADP(+) = (2S)-2-acetolactate + NADPH + H(+). It carries out the reaction (2R,3R)-2,3-dihydroxy-3-methylpentanoate + NADP(+) = (S)-2-ethyl-2-hydroxy-3-oxobutanoate + NADPH + H(+). The protein operates within amino-acid biosynthesis; L-isoleucine biosynthesis; L-isoleucine from 2-oxobutanoate: step 2/4. It participates in amino-acid biosynthesis; L-valine biosynthesis; L-valine from pyruvate: step 2/4. Functionally, involved in the biosynthesis of branched-chain amino acids (BCAA). Catalyzes an alkyl-migration followed by a ketol-acid reduction of (S)-2-acetolactate (S2AL) to yield (R)-2,3-dihydroxy-isovalerate. In the isomerase reaction, S2AL is rearranged via a Mg-dependent methyl migration to produce 3-hydroxy-3-methyl-2-ketobutyrate (HMKB). In the reductase reaction, this 2-ketoacid undergoes a metal-dependent reduction by NADPH to yield (R)-2,3-dihydroxy-isovalerate. The sequence is that of Ketol-acid reductoisomerase (NADP(+)) from Kocuria rhizophila (strain ATCC 9341 / DSM 348 / NBRC 103217 / DC2201).